Here is a 353-residue protein sequence, read N- to C-terminus: MSEPLKPRIDFAEPLKEESTSAFKAQQTFSEAESRTFAPAAIDERPEDEGAAEAAVDAALRPKRSLWRKMVMGGLALFGASVVGQGVQWTMNAWQTQDWVALGGCAAGALIIGAGVGSVVTEWRRLWRLRQRAHERDEARELLHSHSVGKGRAFCEKLAQQAGIDQSHPALQRWYAAIHETQNDREIVGLYANLVQPVLDAQARREISRFAAESTLMIAVSPLALVDMAFIAWRNLRLINRIATLYGIELGYYSRLRLFRLVLLNIAFAGASELVREVGMDWMSQDLAARLSTRAAQGIGAGLLTARLGIKAMELCRPLPWIDNDKPRLGDFRRQLIGQLKETLQKSKSSPEK.

The disordered stretch occupies residues 16 to 35 (KEESTSAFKAQQTFSEAESR). A compositionally biased stretch (polar residues) spans 20 to 31 (TSAFKAQQTFSE). Transmembrane regions (helical) follow at residues 70 to 90 (MVMGGLALFGASVVGQGVQWT), 100 to 120 (VALGGCAAGALIIGAGVGSVV), and 213 to 233 (ESTLMIAVSPLALVDMAFIAW).

This sequence belongs to the UPF0283 family.

The protein resides in the cell inner membrane. This Salmonella heidelberg (strain SL476) protein is UPF0283 membrane protein YcjF.